A 119-amino-acid chain; its full sequence is NADH dehydrogenase [ubiquinone] 1 subunit C2 (119 aa).

A helical membrane pass occupies residues 56 to 75; the sequence is GLHRQLLYITAFFFAGYYLV.

The protein belongs to the complex I NDUFC2 subunit family. As to quaternary structure, complex I is composed of 45 different subunits. Interacts with TMEM242.

The protein localises to the mitochondrion inner membrane. Its function is as follows. Accessory subunit of the mitochondrial membrane respiratory chain NADH dehydrogenase (Complex I), that is believed not to be involved in catalysis but required for the complex assembly. Complex I functions in the transfer of electrons from NADH to the respiratory chain. The immediate electron acceptor for the enzyme is believed to be ubiquinone. This is NADH dehydrogenase [ubiquinone] 1 subunit C2 from Pongo pygmaeus (Bornean orangutan).